The chain runs to 366 residues: Inactive protein RESTRICTED TEV MOVEMENT 2 (366 aa).

Residues 14-121 (VQYEDFVPKS…LPETSRTEAA (108 aa)) form the sHSP domain. An A-1 repeat occupies 129–133 (LEEKR). A 6 X 5 AA repeats A of L-E-E-[SKR]-[ERK] region spans residues 129-220 (LEEKRLLEES…LEERRLEERK (92 aa)). An A-2 repeat occupies 135 to 139 (LEESR). The A-3 repeat unit spans residues 156–160 (LEEKE). One copy of the B-1 repeat lies at 163–176 (IRKLQEEAKAKEEA). Residues 163-206 (IRKLQEEAKAKEEAEMRKLQEEAKANEEAAAKKLQEEIEAKEKL) are 3 X 14 AA repeats B of [IMA]-[RK]-K-L-Q-E-E-A-K-A-K-E-[EK]-[LA]. Residues 178 to 191 (MRKLQEEAKANEEA) form a B-2 repeat. A B-3 repeat occupies 193-205 (AKKLQEEIEAKEK). The A-4 repeat unit spans residues 206–210 (LEERK). The stretch at 211 to 215 (LEERR) is one A-5 repeat. The stretch at 216–220 (LEERK) is one A-6 repeat. A helical transmembrane segment spans residues 322 to 342 (LMMNVGVAALVIFALGAYVSY). Positions 345-366 (CSSSSSSSSSSPSSSSSSTKPE) are disordered. Residues 346–366 (SSSSSSSSSSPSSSSSSTKPE) show a composition bias toward low complexity.

The protein belongs to the small heat shock protein (HSP20) family.

The protein resides in the cell membrane. Seems to not be involved in heat resistance. Unable to mediate restriction of long-distance movement of the pathogenic tobacco etch virus (TEV) without causing a hypersensitive response or inducing systemic acquired resistance. The sequence is that of Inactive protein RESTRICTED TEV MOVEMENT 2 (RTM2) from Arabidopsis thaliana (Mouse-ear cress).